We begin with the raw amino-acid sequence, 329 residues long: MQFIDQARITVRGGRGGDGIVAFRREKYVPAGGPSGGDGGHGADVVLEADSNLQTLLDFKYKRLFAAIDGRRGGPNRCTGASGQPLVIKVPCGTEVRHLTTGILLGDLTNPGERLTVAFGGRGGLGNAHYLSNRNRAPEKCTEGRDGEEWPLQLELKLLAEVGIIGLPNAGKSTLISVLSAARPKIADYPFTTLVPNLGVVRRPSGDGTVFADIPGLIAGAAQGAGLGHDFLRHIERTRLLIHLVDSGADDPVGDLRVVEKELEAYGHGLVSRPRLLVLNKLELLDEQGRDDLLERLEASSGHRPLLISAVMGKGLDALLDQVWQLLGV.

The Obg domain occupies 1–159 (MQFIDQARIT…WPLQLELKLL (159 aa)). Positions 160-328 (AEVGIIGLPN…LLDQVWQLLG (169 aa)) constitute an OBG-type G domain. ATP is bound by residues 166-173 (GLPNAGKS), 191-195 (FTTLV), 213-216 (DIPG), 280-283 (NKLE), and 309-311 (SAV). 2 residues coordinate Mg(2+): S173 and T193.

This sequence belongs to the TRAFAC class OBG-HflX-like GTPase superfamily. OBG GTPase family. As to quaternary structure, monomer. It depends on Mg(2+) as a cofactor.

The protein localises to the cytoplasm. Its function is as follows. An essential GTPase which binds GTP, GDP and possibly (p)ppGpp with moderate affinity, with high nucleotide exchange rates and a fairly low GTP hydrolysis rate. Plays a role in control of the cell cycle, stress response, ribosome biogenesis and in those bacteria that undergo differentiation, in morphogenesis control. This chain is GTPase Obg, found in Synechococcus sp. (strain WH7803).